A 359-amino-acid chain; its full sequence is Peptide chain release factor 1 (359 aa).

Residue Gln235 is modified to N5-methylglutamine. The interval 283–305 (QKAESERSASRKTQVGSGDRSER) is disordered.

This sequence belongs to the prokaryotic/mitochondrial release factor family. Methylated by PrmC. Methylation increases the termination efficiency of RF1.

Its subcellular location is the cytoplasm. Functionally, peptide chain release factor 1 directs the termination of translation in response to the peptide chain termination codons UAG and UAA. The chain is Peptide chain release factor 1 from Bartonella bacilliformis (strain ATCC 35685 / KC583 / Herrer 020/F12,63).